Here is an 891-residue protein sequence, read N- to C-terminus: Fanconi-associated nuclease 1 homolog (891 aa).

Residues Glu-712, Asp-833, Glu-852, and Val-853 each contribute to the Mn(2+) site. The VRR-NUC domain occupies Gly-770–Arg-884.

The protein belongs to the FAN1 family. It depends on Mn(2+) as a cofactor. The cofactor is Mg(2+).

Its subcellular location is the nucleus. It carries out the reaction Hydrolytically removes 5'-nucleotides successively from the 3'-hydroxy termini of 3'-hydroxy-terminated oligonucleotides.. Functionally, nuclease required for the repair of DNA interstrand cross-links (ICLs). Acts as a 5'-3' exonuclease that anchors at a cut end of DNA and cleaves DNA successively at every third nucleotide, allowing to excise an ICL from one strand through flanking incisions. May act upstream of the helicase RECQL4A and the ATPase RAD5A, which is involved in error-free post-replicative repair. Functions independently of MUS81 pathway, but in a similar pathway with RECQ4A, RAD5A and MFH1 in ICL repair. This is Fanconi-associated nuclease 1 homolog from Arabidopsis thaliana (Mouse-ear cress).